Here is a 99-residue protein sequence, read N- to C-terminus: NADH-quinone oxidoreductase subunit K 1 (99 aa).

3 helical membrane passes run 3–23, 28–48, and 59–79; these read PVNY…GVLV, IVVF…LVTF, and IVAF…LAII.

Belongs to the complex I subunit 4L family. NDH-1 is composed of 14 different subunits. Subunits NuoA, H, J, K, L, M, N constitute the membrane sector of the complex.

It is found in the cell membrane. It catalyses the reaction a quinone + NADH + 5 H(+)(in) = a quinol + NAD(+) + 4 H(+)(out). NDH-1 shuttles electrons from NADH, via FMN and iron-sulfur (Fe-S) centers, to quinones in the respiratory chain. The immediate electron acceptor for the enzyme in this species is believed to be a menaquinone. Couples the redox reaction to proton translocation (for every two electrons transferred, four hydrogen ions are translocated across the cytoplasmic membrane), and thus conserves the redox energy in a proton gradient. This chain is NADH-quinone oxidoreductase subunit K 1, found in Streptomyces griseus subsp. griseus (strain JCM 4626 / CBS 651.72 / NBRC 13350 / KCC S-0626 / ISP 5235).